A 583-amino-acid chain; its full sequence is MTGLLKRKFDQLEEDDSSSSSSSSFSSRLSLSSFPASSASPAWNSDEEGPGGQAPQSDQDSCGLQSFTPPSILKRAPRERPGHVAFNGITVYYFPRCQGFTSVPSRGGCTLGMASRHSTCRLFSLAEFTQEQVRARREKLRRRLKEEKLEMLRWKFSVAGVPESGAGVPLTADAIDDASVEEDLAVAVANGRLEEANFLQPHPPRQRRALLRASGVRRIDREEKRELQVLRQSREDCGCHCDGVCDPETCSCSLAGIKCQMDHTSFPCGCCREGCENPNGRVEFNQTRVQTHFIHTLTRLQMEQGAESLGDLESPVEDTPVEQAALSPFPPSKPPVSSELGDSSCSSDMTDSSTTLSSGSSEPPNHPAHPSLPGPSFRSGVDEDSLEQILNFSDSDLGIEEEEEEGGGVGNLDNLSCFHLADIFGTGDPGSLASWTHSQSGSSLASGILDENANLDASCFLNSGLGGLREGSLPGSSGSPEGDAVQSSSWDLSLSSCDSFELLQALPDYSLGPHYTSRRVSGSPDSLETFHPLPSFSPPRDASTCFLESLVGLSEPVTEVLAPLLESQFEDAALAPLLEPVPV.

Disordered stretches follow at residues 1–79 and 306–381; these read MTGL…APRE and AESL…RSGV. Residues 18 to 41 show a composition bias toward low complexity; that stretch reads SSSSSSSFSSRLSLSSFPASSASP. Positions 54–69 are enriched in polar residues; it reads APQSDQDSCGLQSFTP. Residues 335 to 361 are compositionally biased toward low complexity; it reads PVSSELGDSSCSSDMTDSSTTLSSGSS. Residues 364-373 are compositionally biased toward pro residues; sequence PNHPAHPSLP.

This sequence belongs to the AXUD1 family. As to expression, widely expressed with highest levels in thymus and lung. Low levels detected in naive T-cells.

The protein resides in the nucleus. Its function is as follows. Binds to the consensus sequence 5'-AGAGTG-3' and has transcriptional activator activity. May have a tumor-suppressor function. May play a role in apoptosis. This chain is Cysteine/serine-rich nuclear protein 1 (Csrnp1), found in Mus musculus (Mouse).